Reading from the N-terminus, the 873-residue chain is Zinc fingers and homeoboxes protein 1 (873 aa).

A Phosphothreonine modification is found at T36. A disordered region spans residues 41 to 63 (AKAESVSSDEEVHGSVDSDNQQN). S45, S47, and S48 each carry phosphoserine. A compositionally biased stretch (basic and acidic residues) spans 50 to 63 (EEVHGSVDSDNQQN). 2 C2H2-type zinc fingers span residues 70–93 (YECK…DSEH) and 102–125 (YVCV…LKYH). K159 is covalently cross-linked (Glycyl lysine isopeptide (Lys-Gly) (interchain with G-Cter in SUMO2)). The segment at 198–247 (VHHNSAEGTSEEKENGVKASQEENAESVSSSALESNTSTSTINRVHPSPA) is disordered. Position 202 is a phosphoserine (S202). Positions 223–238 (ESVSSSALESNTSTST) are enriched in low complexity. The segment at 272-432 (NSNLLPKVLI…QTNVQKSQVP (161 aa)) is required for dimerization. The required for interaction with NFYA stretch occupies residues 272-564 (NSNLLPKVLI…SQQKQSWNPF (293 aa)). Positions 284–346 (NSIPTYNAAL…LKHGVSWTPE (63 aa)) form a DNA-binding region, homeobox 1. The interval 429-456 (SQVPAAQPATDTKPATAAVPSSPSVRPE) is disordered. Glycyl lysine isopeptide (Lys-Gly) (interchain with G-Cter in SUMO2) cross-links involve residues K441 and K485. Residues 464 to 526 (SFGIRAKKTK…YNQRNSKSNQ (63 aa)) constitute a DNA-binding region (homeobox 2). Disordered regions lie at residues 541-568 (DSSD…PDFA), 627-668 (DEKI…CKKT), and 731-767 (SSSL…KRMN). Positions 569–630 (PQKFKEKTAE…KTKALKDEKI (62 aa)) form a DNA-binding region, homeobox 3. K629 is covalently cross-linked (Glycyl lysine isopeptide (Lys-Gly) (interchain with G-Cter in SUMO2)). Residue S648 is modified to Phosphoserine. The homeobox 4 DNA-binding region spans 660–722 (GTGKICKKTP…YAWKNGNLKW (63 aa)). Positions 734 to 768 (LNGLSSLRRRGRGRPKGRGRGRPRGRPRGGKRMNT) are required for nuclear localization. Residues 740-764 (LRRRGRGRPKGRGRGRPRGRPRGGK) are compositionally biased toward basic residues. Position 774 is a phosphoserine (S774). A DNA-binding region (homeobox 5) is located at residues 777-832 (KFKTGTAILKDYYLKHKFLNEQDLDELVNRSHMGYEQVREWFAERQRRSELGIELF). The tract at residues 829 to 873 (IELFEENEEEDEVVDDQEEDEEETDDSDTWEPPRHVKRKLSKSDD) is disordered. A compositionally biased stretch (acidic residues) spans 831-857 (LFEENEEEDEVVDDQEEDEEETDDSDT). Positions 831–873 (LFEENEEEDEVVDDQEEDEEETDDSDTWEPPRHVKRKLSKSDD) are required for repressor activity. Positions 863–873 (HVKRKLSKSDD) are enriched in basic residues.

The protein belongs to the ZHX family. As to quaternary structure, forms homodimers. Heterodimer (via HD1 domain) with ZHX2 (via HD1 domain). Also forms a heterodimer with ZHX3 which is a prerequisite for repressor activity. Interacts with ATF7IP and NFYA. Interacts (via homeobox domains) with DNMT3B (via PWWP domain). As to expression, widely expressed with highest levels in brain.

The protein localises to the nucleus. Functionally, acts as a transcriptional repressor. Increases DNMT3B-mediated repressive transcriptional activity when DNMT3B is tethered to DNA. May link molecule between DNMT3B and other co-repressor proteins. This chain is Zinc fingers and homeoboxes protein 1 (Zhx1), found in Mus musculus (Mouse).